The sequence spans 91 residues: Small ribosomal subunit protein uS19 (91 aa).

Residues 72 to 91 are disordered; the sequence is GEFSPTRTYTGHGSEKGKKK.

This sequence belongs to the universal ribosomal protein uS19 family.

Functionally, protein S19 forms a complex with S13 that binds strongly to the 16S ribosomal RNA. The chain is Small ribosomal subunit protein uS19 from Mycoplasma mobile (strain ATCC 43663 / 163K / NCTC 11711) (Mesomycoplasma mobile).